The primary structure comprises 544 residues: Chaperonin GroEL (544 aa).

Residues 29–32 (TIGP), 86–90 (DGTTT), glycine 413, 478–480 (NAA), and aspartate 494 each bind ATP.

It belongs to the chaperonin (HSP60) family. In terms of assembly, forms a cylinder of 14 subunits composed of two heptameric rings stacked back-to-back. Interacts with the co-chaperonin GroES.

It localises to the cytoplasm. It carries out the reaction ATP + H2O + a folded polypeptide = ADP + phosphate + an unfolded polypeptide.. In terms of biological role, together with its co-chaperonin GroES, plays an essential role in assisting protein folding. The GroEL-GroES system forms a nano-cage that allows encapsulation of the non-native substrate proteins and provides a physical environment optimized to promote and accelerate protein folding. In Exiguobacterium sp. (strain ATCC BAA-1283 / AT1b), this protein is Chaperonin GroEL.